The sequence spans 433 residues: 23S rRNA (uracil(1939)-C(5))-methyltransferase RlmD (433 aa).

Positions 10–68 (RTTTRQIITVSVNDLDSFGQGVARHNGKTLFIPGLLPQENAEVTVTEDKKQYARAKVVR) constitute a TRAM domain. The [4Fe-4S] cluster site is built by cysteine 81, cysteine 87, cysteine 90, and cysteine 162. The S-adenosyl-L-methionine site is built by glutamine 265, phenylalanine 294, asparagine 299, glutamate 315, asparagine 342, and aspartate 363. Cysteine 389 (nucleophile) is an active-site residue.

This sequence belongs to the class I-like SAM-binding methyltransferase superfamily. RNA M5U methyltransferase family. RlmD subfamily.

The enzyme catalyses uridine(1939) in 23S rRNA + S-adenosyl-L-methionine = 5-methyluridine(1939) in 23S rRNA + S-adenosyl-L-homocysteine + H(+). Functionally, catalyzes the formation of 5-methyl-uridine at position 1939 (m5U1939) in 23S rRNA. The polypeptide is 23S rRNA (uracil(1939)-C(5))-methyltransferase RlmD (Shigella boydii serotype 4 (strain Sb227)).